The primary structure comprises 279 residues: Ribosomal RNA small subunit methyltransferase A (279 aa).

Leu-42, Gly-67, Glu-88, Asp-113, and Asn-129 together coordinate S-adenosyl-L-methionine.

This sequence belongs to the class I-like SAM-binding methyltransferase superfamily. rRNA adenine N(6)-methyltransferase family. RsmA subfamily.

The protein localises to the cytoplasm. It catalyses the reaction adenosine(1518)/adenosine(1519) in 16S rRNA + 4 S-adenosyl-L-methionine = N(6)-dimethyladenosine(1518)/N(6)-dimethyladenosine(1519) in 16S rRNA + 4 S-adenosyl-L-homocysteine + 4 H(+). Its function is as follows. Specifically dimethylates two adjacent adenosines (A1518 and A1519) in the loop of a conserved hairpin near the 3'-end of 16S rRNA in the 30S particle. May play a critical role in biogenesis of 30S subunits. In Thermotoga maritima (strain ATCC 43589 / DSM 3109 / JCM 10099 / NBRC 100826 / MSB8), this protein is Ribosomal RNA small subunit methyltransferase A.